A 540-amino-acid polypeptide reads, in one-letter code: MGQSHSKGNSGPGDSLQSYPSFSRSDTKESLRSLRGSIRSKIRSSDSPRGSTAGLSDDKSDAASVKSTTSRRSSTNQSVQSPDDTPSQPDAPEPPPSPSLSSSLKRGHKDVNAMQQSGEVDHVSDVPPTGAAPTGPSTQKVGESILIKRENQLNPILDFIMNAPLETSGSPGMGMGALKSIDLDDMISRLLDAGYSTKVTKTVCLKNAEIMAICSAARELFLSQPALLELSAPVKIVGDVHGQYTDLIRLFEMCGFPPASNYLFLGDYVDRGKQSLETILLLLCYKLKYPENFFLLRGNHECANVTRVYGFYDECKRRCNIKIWKTFIDTFNCLPIAATVAGKIFCVHGGLSPSLSHMDDIRGIARPTDVPDYGLLNDLLWSDPADMEEDWEPNERGVSYCFGKKVIMNFLQRHDFDLVCRAHMVVEDGYEFYQDRILVTVFSAPNYCGEFDNWGAIMSVSGELLCSFELLKPLDSTALKNHIKKGRKERNSMLSSPVSPPLLRFVVAKEDHNLFVQHRRDACGLFLAYPSLVTSWGISR.

2 disordered regions span residues 1–108 (MGQS…KRGH) and 120–140 (VDHV…STQK). Composition is skewed to polar residues over residues 15-24 (SLQSYPSFSR) and 45-54 (SDSPRGSTAG). Residues 62–88 (AASVKSTTSRRSSTNQSVQSPDDTPSQ) show a composition bias toward low complexity. Pro residues predominate over residues 89–98 (PDAPEPPPSP). Over residues 127–136 (PPTGAAPTGP) the composition is skewed to low complexity. Residues aspartate 239, histidine 241, aspartate 267, and asparagine 299 each coordinate Mn(2+). The 283-residue stretch at 258–540 (PASNYLFLGD…SLVTSWGISR (283 aa)) folds into the Phosphatase tensin-type domain. Histidine 300 (proton donor) is an active-site residue. Mn(2+) contacts are provided by histidine 348 and histidine 423.

This sequence belongs to the PPP phosphatase family. PP-Z subfamily. Interacts with at least 54 proteins, of which 31 are detected only after iron starvation and 22 are detected only in control conditions. Only the regulatory subunit of the protein phosphatase PP1 (Afu1g04800/AFUB_005140) interacts with ppzA in both conditions. It depends on Mn(2+) as a cofactor.

The protein resides in the cytoplasm. It carries out the reaction O-phospho-L-seryl-[protein] + H2O = L-seryl-[protein] + phosphate. The catalysed reaction is O-phospho-L-threonyl-[protein] + H2O = L-threonyl-[protein] + phosphate. Functionally, catalytic subunit of protein phosphatase Z (PPZ) involved in iron assimilation. Regulates secondary metabolites production, including gliotoxin, pyripyropene A, fumagillin, fumiquinazoline A, triacetyl-fusarinine C, and helvolic acid. Plays a key role in pathogenicity. The polypeptide is Serine/threonine-protein phosphatase ppzA (Aspergillus fumigatus (strain CBS 144.89 / FGSC A1163 / CEA10) (Neosartorya fumigata)).